Consider the following 251-residue polypeptide: Hydroxyacylglutathione hydrolase (251 aa).

His53, His55, Asp57, His58, His110, Asp127, and His165 together coordinate Zn(2+).

This sequence belongs to the metallo-beta-lactamase superfamily. Glyoxalase II family. In terms of assembly, monomer. Zn(2+) is required as a cofactor.

It catalyses the reaction an S-(2-hydroxyacyl)glutathione + H2O = a 2-hydroxy carboxylate + glutathione + H(+). Its pathway is secondary metabolite metabolism; methylglyoxal degradation; (R)-lactate from methylglyoxal: step 2/2. Thiolesterase that catalyzes the hydrolysis of S-D-lactoyl-glutathione to form glutathione and D-lactic acid. This chain is Hydroxyacylglutathione hydrolase, found in Escherichia fergusonii (strain ATCC 35469 / DSM 13698 / CCUG 18766 / IAM 14443 / JCM 21226 / LMG 7866 / NBRC 102419 / NCTC 12128 / CDC 0568-73).